Here is a 529-residue protein sequence, read N- to C-terminus: Lysine--tRNA ligase (529 aa).

Residues 44-52 (PSGLPHIGT) carry the 'HIGH' region motif. The short motif at 290 to 294 (KISKS) is the 'KMSKS' region element. Lysine 293 lines the ATP pocket.

It belongs to the class-I aminoacyl-tRNA synthetase family.

It is found in the cytoplasm. It catalyses the reaction tRNA(Lys) + L-lysine + ATP = L-lysyl-tRNA(Lys) + AMP + diphosphate. The chain is Lysine--tRNA ligase from Rickettsia akari (strain Hartford).